Here is a 122-residue protein sequence, read N- to C-terminus: Ribosome-binding factor A (122 aa).

It belongs to the RbfA family. As to quaternary structure, monomer. Binds 30S ribosomal subunits, but not 50S ribosomal subunits or 70S ribosomes.

The protein resides in the cytoplasm. In terms of biological role, one of several proteins that assist in the late maturation steps of the functional core of the 30S ribosomal subunit. Associates with free 30S ribosomal subunits (but not with 30S subunits that are part of 70S ribosomes or polysomes). Required for efficient processing of 16S rRNA. May interact with the 5'-terminal helix region of 16S rRNA. This is Ribosome-binding factor A from Streptococcus agalactiae serotype III (strain NEM316).